We begin with the raw amino-acid sequence, 352 residues long: Quinolinate synthase (352 aa).

Iminosuccinate contacts are provided by H48 and S69. C114 contributes to the [4Fe-4S] cluster binding site. Iminosuccinate is bound by residues Y140–N142 and S157. C201 provides a ligand contact to [4Fe-4S] cluster. Iminosuccinate contacts are provided by residues H227–E229 and T244. C298 contacts [4Fe-4S] cluster.

This sequence belongs to the quinolinate synthase family. Type 1 subfamily. The cofactor is [4Fe-4S] cluster.

It is found in the cytoplasm. It catalyses the reaction iminosuccinate + dihydroxyacetone phosphate = quinolinate + phosphate + 2 H2O + H(+). Its pathway is cofactor biosynthesis; NAD(+) biosynthesis; quinolinate from iminoaspartate: step 1/1. Its function is as follows. Catalyzes the condensation of iminoaspartate with dihydroxyacetone phosphate to form quinolinate. The sequence is that of Quinolinate synthase from Pseudomonas putida (strain GB-1).